The chain runs to 173 residues: MSIILGIDPGSRITGYGVIRQQGRQLEYIGSGCIRTAVDDLPTRLKLVYAGVSEIITQFNPDCFAIEQVFMAKNADSALKLGQARGAAIVAAVNRDLPVFEYAARQIKQTVVGNGGAEKAQVQHMVRSLLKLPANPQADAADALAVAITHCHVSQNALRISSGRLNLARGRLR.

Residues aspartate 8, glutamate 67, and aspartate 139 contribute to the active site. Residues aspartate 8, glutamate 67, and aspartate 139 each contribute to the Mg(2+) site.

It belongs to the RuvC family. In terms of assembly, homodimer which binds Holliday junction (HJ) DNA. The HJ becomes 2-fold symmetrical on binding to RuvC with unstacked arms; it has a different conformation from HJ DNA in complex with RuvA. In the full resolvosome a probable DNA-RuvA(4)-RuvB(12)-RuvC(2) complex forms which resolves the HJ. Mg(2+) serves as cofactor.

The protein resides in the cytoplasm. It catalyses the reaction Endonucleolytic cleavage at a junction such as a reciprocal single-stranded crossover between two homologous DNA duplexes (Holliday junction).. Its function is as follows. The RuvA-RuvB-RuvC complex processes Holliday junction (HJ) DNA during genetic recombination and DNA repair. Endonuclease that resolves HJ intermediates. Cleaves cruciform DNA by making single-stranded nicks across the HJ at symmetrical positions within the homologous arms, yielding a 5'-phosphate and a 3'-hydroxyl group; requires a central core of homology in the junction. The consensus cleavage sequence is 5'-(A/T)TT(C/G)-3'. Cleavage occurs on the 3'-side of the TT dinucleotide at the point of strand exchange. HJ branch migration catalyzed by RuvA-RuvB allows RuvC to scan DNA until it finds its consensus sequence, where it cleaves and resolves the cruciform DNA. This Edwardsiella ictaluri (strain 93-146) protein is Crossover junction endodeoxyribonuclease RuvC.